A 769-amino-acid polypeptide reads, in one-letter code: Probable beta-glucosidase M (769 aa).

The signal sequence occupies residues 1 to 22; the sequence is MHSNVGLAGLAGLLATASVCLS. N-linked (GlcNAc...) asparagine glycosylation is found at Asn28, Asn75, and Asn262. Residue Asp290 is part of the active site. Residues Asn318, Asn325, Asn396, Asn437, Asn510, Asn546, and Asn625 are each glycosylated (N-linked (GlcNAc...) asparagine).

The protein belongs to the glycosyl hydrolase 3 family.

The protein localises to the secreted. It carries out the reaction Hydrolysis of terminal, non-reducing beta-D-glucosyl residues with release of beta-D-glucose.. Its pathway is glycan metabolism; cellulose degradation. In terms of biological role, beta-glucosidases are one of a number of cellulolytic enzymes involved in the degradation of cellulosic biomass. Catalyzes the last step releasing glucose from the inhibitory cellobiose. This Aspergillus fumigatus (strain CBS 144.89 / FGSC A1163 / CEA10) (Neosartorya fumigata) protein is Probable beta-glucosidase M (bglM).